The chain runs to 292 residues: tRNA (guanine-N(7)-)-methyltransferase (292 aa).

The interval 1–52 (MGKIEATSKEEKLRVQKEAEARRRAYRDLKKEARQMQKEVKFDTDDNSELPK) is disordered. Residues Gly-106, 129–130 (EI), 166–167 (NA), and Cys-186 contribute to the S-adenosyl-L-methionine site. The active site involves Asp-189. S-adenosyl-L-methionine is bound at residue 264-266 (TEE).

It belongs to the class I-like SAM-binding methyltransferase superfamily. TrmB family. In terms of assembly, forms a complex with TRM82.

Its subcellular location is the nucleus. The enzyme catalyses guanosine(46) in tRNA + S-adenosyl-L-methionine = N(7)-methylguanosine(46) in tRNA + S-adenosyl-L-homocysteine. The protein operates within tRNA modification; N(7)-methylguanine-tRNA biosynthesis. Its function is as follows. Catalyzes the formation of N(7)-methylguanine at position 46 (m7G46) in tRNA. This chain is tRNA (guanine-N(7)-)-methyltransferase, found in Debaryomyces hansenii (strain ATCC 36239 / CBS 767 / BCRC 21394 / JCM 1990 / NBRC 0083 / IGC 2968) (Yeast).